Here is a 95-residue protein sequence, read N- to C-terminus: Integration host factor subunit beta (95 aa).

The protein belongs to the bacterial histone-like protein family. Heterodimer of an alpha and a beta chain.

In terms of biological role, this protein is one of the two subunits of integration host factor, a specific DNA-binding protein that functions in genetic recombination as well as in transcriptional and translational control. This chain is Integration host factor subunit beta, found in Ruegeria sp. (strain TM1040) (Silicibacter sp.).